Consider the following 180-residue polypeptide: MENFFNQFFENIGEDKNREGLKETPKRVQELWKFLYKGYKEDPKVALKSAYFQGVCDEMIVAQNIEFYSTCEHHLLPFFGNISVGYIPKEKIVGISAIAKLIEIYSKRLQIQERLTTQIAETFDEIIEPRGVIVVCEAKHLCMSMQGVQKQNAIIKTSVLRGLFKKDPKTRAEFMQLLKS.

Cysteine 71, histidine 74, and cysteine 142 together coordinate Zn(2+).

This sequence belongs to the GTP cyclohydrolase I family. In terms of assembly, homomer.

It carries out the reaction GTP + H2O = 7,8-dihydroneopterin 3'-triphosphate + formate + H(+). Its pathway is cofactor biosynthesis; 7,8-dihydroneopterin triphosphate biosynthesis; 7,8-dihydroneopterin triphosphate from GTP: step 1/1. This chain is GTP cyclohydrolase 1, found in Helicobacter pylori (strain G27).